We begin with the raw amino-acid sequence, 292 residues long: tRNA pseudouridine synthase B (292 aa).

D38 functions as the Nucleophile in the catalytic mechanism.

The protein belongs to the pseudouridine synthase TruB family. Type 1 subfamily.

It catalyses the reaction uridine(55) in tRNA = pseudouridine(55) in tRNA. Responsible for synthesis of pseudouridine from uracil-55 in the psi GC loop of transfer RNAs. In Gloeobacter violaceus (strain ATCC 29082 / PCC 7421), this protein is tRNA pseudouridine synthase B.